The following is a 371-amino-acid chain: Protein disulfide isomerase-like 2-2 (371 aa).

Positions 1-27 (MAIPRISPRKTLPLFAALALALAWAFA) are cleaved as a signal peptide. Thioredoxin domains are found at residues 28–143 (APAF…TEGG) and 147–262 (KLAT…EKCG). Active-site nucleophile residues include Cys-64, Cys-67, Cys-183, and Cys-186. 2 cysteine pairs are disulfide-bonded: Cys-64–Cys-67 and Cys-183–Cys-186.

It belongs to the protein disulfide isomerase family.

The protein resides in the secreted. The catalysed reaction is Catalyzes the rearrangement of -S-S- bonds in proteins.. Acts as a protein-folding catalyst that interacts with nascent polypeptides to catalyze the formation, isomerization, and reduction or oxidation of disulfide bonds. May play a role in storage protein biogenesis. This is Protein disulfide isomerase-like 2-2 (PDIL2-2) from Oryza sativa subsp. japonica (Rice).